The chain runs to 628 residues: Junctophilin-4 (628 aa).

Residues 1-606 (MSPGGKFDFD…RPAQPGAANP (606 aa)) are Cytoplasmic-facing. 6 MORN repeats span residues 50 to 72 (LGVF…KREG), 74 to 95 (GVER…KGRS), 96 to 117 (GVWE…FQDG), 118 to 140 (YGTE…KRHG), 141 to 163 (YGVR…RTSL), and 164 to 186 (DSGH…EGGS). Disordered stretches follow at residues 158–214 (PRRT…RTPA) and 231–276 (GGRR…LIEG). The segment covering 170–179 (PPTPPPPLPL) has biased composition (pro residues). Low complexity-rich tracts occupy residues 231–241 (GGRRSSLGSKR) and 253–272 (GSTG…APPA). 2 MORN repeats span residues 317–339 (YGRT…RLVH) and 340–362 (GGRV…KVDR). Positions 415–602 (DLQPMLEAPG…AATERPAQPG (188 aa)) are disordered. Residues 432 to 443 (EGSDTEPLDEDS) show a composition bias toward acidic residues. 2 stretches are compositionally biased toward low complexity: residues 453–467 (PSEG…PASS) and 528–541 (GSPL…SSGS). The helical; Anchor for type IV membrane protein transmembrane segment at 607–628 (LVVGAVALLDLSLAFLFSQLLT) threads the bilayer.

Belongs to the junctophilin family.

The protein localises to the cell membrane. It is found in the endoplasmic reticulum membrane. In terms of biological role, junctophilins contribute to the formation of junctional membrane complexes (JMCs) which link the plasma membrane with the endoplasmic or sarcoplasmic reticulum in excitable cells. Provides a structural foundation for functional cross-talk between the cell surface and intracellular calcium release channels. JPH4 is brain-specific and appears to have an active role in certain neurons involved in motor coordination and memory. The chain is Junctophilin-4 (JPH4) from Homo sapiens (Human).